The primary structure comprises 409 residues: Failed axon connections homolog (409 aa).

Residues 68 to 88 traverse the membrane as a helical segment; that stretch reads YLTGGALLAAAAYLLHELLVI. Residues 372-409 form a disordered region; sequence DEGAENSFSRTPDTDFTGHSLFDSDVDMDDYTEHEQCK.

The protein belongs to the FAX family.

The protein localises to the membrane. Its function is as follows. May play a role in axonal development. This Rattus norvegicus (Rat) protein is Failed axon connections homolog (Faxc).